A 25-amino-acid chain; its full sequence is Small ribosomal subunit protein eS32A (25 aa).

The segment at Met-1–Lys-25 is disordered.

It belongs to the eukaryotic ribosomal protein eS32 family. As to quaternary structure, component of the large ribosomal subunit (LSU). Mature yeast ribosomes consist of a small (40S) and a large (60S) subunit. The 40S small subunit contains 1 molecule of ribosomal RNA (18S rRNA) and at least 33 different proteins. The large 60S subunit contains 3 rRNA molecules (25S, 5.8S and 5S rRNA) and at least 46 different proteins.

It localises to the cytoplasm. It is found in the nucleus. Component of the ribosome, a large ribonucleoprotein complex responsible for the synthesis of proteins in the cell. The small ribosomal subunit (SSU) binds messenger RNAs (mRNAs) and translates the encoded message by selecting cognate aminoacyl-transfer RNA (tRNA) molecules. The large subunit (LSU) contains the ribosomal catalytic site termed the peptidyl transferase center (PTC), which catalyzes the formation of peptide bonds, thereby polymerizing the amino acids delivered by tRNAs into a polypeptide chain. The nascent polypeptides leave the ribosome through a tunnel in the LSU and interact with protein factors that function in enzymatic processing, targeting, and the membrane insertion of nascent chains at the exit of the ribosomal tunnel. The protein is Small ribosomal subunit protein eS32A (rpl4101) of Schizosaccharomyces pombe (strain 972 / ATCC 24843) (Fission yeast).